The sequence spans 446 residues: Ribosomal protein uS12 methylthiotransferase RimO (446 aa).

An MTTase N-terminal domain is found at 6 to 116; sequence PNIGFISLGC…VMQQVHKYVP (111 aa). Positions 15, 51, 80, 148, 152, and 155 each coordinate [4Fe-4S] cluster. One can recognise a Radical SAM core domain in the interval 134-375; sequence LTPKHYAYLK…MQLQQEISAA (242 aa). The TRAM domain occupies 378–446; the sequence is QQKVGKVFTV…AYDLYASLIN (69 aa).

The protein belongs to the methylthiotransferase family. RimO subfamily. It depends on [4Fe-4S] cluster as a cofactor.

It is found in the cytoplasm. The enzyme catalyses L-aspartate(89)-[ribosomal protein uS12]-hydrogen + (sulfur carrier)-SH + AH2 + 2 S-adenosyl-L-methionine = 3-methylsulfanyl-L-aspartate(89)-[ribosomal protein uS12]-hydrogen + (sulfur carrier)-H + 5'-deoxyadenosine + L-methionine + A + S-adenosyl-L-homocysteine + 2 H(+). Catalyzes the methylthiolation of an aspartic acid residue of ribosomal protein uS12. The chain is Ribosomal protein uS12 methylthiotransferase RimO from Pasteurella multocida (strain Pm70).